The sequence spans 190 residues: MKDIRSALVMFILFTIICGGIYPSVVTGIANAVFPKQAQGSFVTGKDHRVVGSSLIGQPFSDAKYFWPRPSATVDFGYNSMASGGSNSGPTNPEYLKTVAERVKTLHDAGAAGSIPTALVQASGSGLDPDISPEAARIQVARVAKVRGMTAEQVERILAAHTRERQLGFLGEPRVNVLELNLALDNRENR.

A helical membrane pass occupies residues 9–29 (VMFILFTIICGGIYPSVVTGI).

The protein belongs to the KdpC family. In terms of assembly, the system is composed of three essential subunits: KdpA, KdpB and KdpC.

It is found in the cell inner membrane. Part of the high-affinity ATP-driven potassium transport (or Kdp) system, which catalyzes the hydrolysis of ATP coupled with the electrogenic transport of potassium into the cytoplasm. This subunit acts as a catalytic chaperone that increases the ATP-binding affinity of the ATP-hydrolyzing subunit KdpB by the formation of a transient KdpB/KdpC/ATP ternary complex. The sequence is that of Potassium-transporting ATPase KdpC subunit from Citrifermentans bemidjiense (strain ATCC BAA-1014 / DSM 16622 / JCM 12645 / Bem) (Geobacter bemidjiensis).